A 397-amino-acid polypeptide reads, in one-letter code: Elongation factor Tu (397 aa).

In terms of domain architecture, tr-type G spans 10–206 (KPHVNIGTIG…EVDAYIPTPE (197 aa)). Residues 19-26 (GHVDHGKT) form a G1 region. 19-26 (GHVDHGKT) lines the GTP pocket. Threonine 26 serves as a coordination point for Mg(2+). A G2 region spans residues 60–64 (GITIN). The G3 stretch occupies residues 81 to 84 (DCPG). GTP-binding positions include 81-85 (DCPGH) and 136-139 (NKAD). Residues 136-139 (NKAD) are G4. The interval 174-176 (SAL) is G5.

Belongs to the TRAFAC class translation factor GTPase superfamily. Classic translation factor GTPase family. EF-Tu/EF-1A subfamily. Monomer.

The protein resides in the cytoplasm. The enzyme catalyses GTP + H2O = GDP + phosphate + H(+). Functionally, GTP hydrolase that promotes the GTP-dependent binding of aminoacyl-tRNA to the A-site of ribosomes during protein biosynthesis. This Clostridium acetobutylicum (strain ATCC 824 / DSM 792 / JCM 1419 / IAM 19013 / LMG 5710 / NBRC 13948 / NRRL B-527 / VKM B-1787 / 2291 / W) protein is Elongation factor Tu.